Reading from the N-terminus, the 740-residue chain is Polyribonucleotide nucleotidyltransferase (740 aa).

Mg(2+) contacts are provided by Asp-496 and Asp-502. A KH domain is found at 563–622 (PAIIRTSIHPDKIRDIIGPGGKIIKKLVEETGADIDIEDDGRVFIAAVDREKGKRALEII). An S1 motif domain is found at 632 to 706 (GKLYNGKVTR…QQGRLKLSKK (75 aa)). Positions 707-740 (EAMRDMGLAPAESTSEQPEKRERRPFSRPKATKE) are disordered. Residues 723–740 (QPEKRERRPFSRPKATKE) are compositionally biased toward basic and acidic residues.

Belongs to the polyribonucleotide nucleotidyltransferase family. Requires Mg(2+) as cofactor.

It is found in the cytoplasm. The catalysed reaction is RNA(n+1) + phosphate = RNA(n) + a ribonucleoside 5'-diphosphate. In terms of biological role, involved in mRNA degradation. Catalyzes the phosphorolysis of single-stranded polyribonucleotides processively in the 3'- to 5'-direction. The protein is Polyribonucleotide nucleotidyltransferase of Desulforamulus reducens (strain ATCC BAA-1160 / DSM 100696 / MI-1) (Desulfotomaculum reducens).